The sequence spans 802 residues: ATP-dependent zinc metalloprotease FTSH 7, chloroplastic (802 aa).

Residues 1–55 (MTTTFEFLQPRIHGFATCCSSNSLLYSKASRFFNDRCRVYRQNPNRFVSNSITLP) constitute a chloroplast transit peptide. The interval 87 to 117 (CQEDDQNESSSEEEESSQSTPAKSERKREKK) is disordered. Positions 88–102 (QEDDQNESSSEEEES) are enriched in acidic residues. Transmembrane regions (helical) follow at residues 134 to 154 (IIQAQGIGVLLLQLSVVMFVM) and 268 to 288 (GGFFNSALIALFYIAVLAGLI). ATP is bound at residue 365 to 372 (GLPGTGKT). His590 contacts Zn(2+). Glu591 is an active-site residue. Residues His594 and Asp673 each coordinate Zn(2+).

In the N-terminal section; belongs to the AAA ATPase family. This sequence in the C-terminal section; belongs to the peptidase M41 family. Zn(2+) is required as a cofactor.

The protein localises to the plastid. It is found in the chloroplast thylakoid membrane. In terms of biological role, probable ATP-dependent zinc metallopeptidase. This chain is ATP-dependent zinc metalloprotease FTSH 7, chloroplastic (FTSH7), found in Arabidopsis thaliana (Mouse-ear cress).